We begin with the raw amino-acid sequence, 190 residues long: Ras-related protein RabF1 (190 aa).

15 to 22 contacts GTP; the sequence is GDSGVGKT. The Effector region signature appears at 37-44; it reads HITIGIEF. Residues 62–66 and 119–122 contribute to the GTP site; these read DTAGE and NKND. Residue cysteine 187 is modified to Cysteine methyl ester. The S-geranylgeranyl cysteine moiety is linked to residue cysteine 187. Residues 188-190 constitute a propeptide, removed in mature form; that stretch reads IIN.

The protein belongs to the small GTPase superfamily. Rab family.

It localises to the cell membrane. The protein is Ras-related protein RabF1 (rabF1-1) of Dictyostelium discoideum (Social amoeba).